A 302-amino-acid polypeptide reads, in one-letter code: Nucleotide-binding protein SERP0433 (302 aa).

ATP is bound at residue 18-25; the sequence is GMSGAGKS. 69–72 serves as a coordination point for GTP; it reads DLRG.

The protein belongs to the RapZ-like family.

Its function is as follows. Displays ATPase and GTPase activities. The protein is Nucleotide-binding protein SERP0433 of Staphylococcus epidermidis (strain ATCC 35984 / DSM 28319 / BCRC 17069 / CCUG 31568 / BM 3577 / RP62A).